A 3392-amino-acid chain; its full sequence is Genome polyprotein (3392 aa).

At 1–101 (MNNQRKKTGR…LNIMNRRKRS (101 aa)) the chain is on the cytoplasmic side. Residues 33 to 74 (FSKGLLSGQGPMKLVMAFIAFLRFLAIPPTAGILARWSSFKK) form a hydrophobic; homodimerization of capsid protein C region. A propeptide spans 101 to 114 (SVTMLLMLLPTALA) (ER anchor for the protein C, removed in mature form by serine protease NS3). The chain crosses the membrane as a helical span at residues 102 to 119 (VTMLLMLLPTALAFHLTT). Over 120–242 (RGGEPHMIVS…QIQKVETWAL (123 aa)) the chain is Extracellular. N-linked (GlcNAc...) asparagine; by host glycosylation occurs at Asn183. A helical membrane pass occupies residues 243–260 (RHPGFTVIALFLAHAIGT). Residue Ser261 is a topological domain, cytoplasmic. Residues 262–280 (ITQKGIIFILLMLVTPSMA) traverse the membrane as a helical segment. At 281-725 (MRCVGIGNRD…VHQVFGTAYG (445 aa)) the chain is on the extracellular side. Cystine bridges form between Cys283–Cys310, Cys340–Cys401, Cys354–Cys385, and Cys372–Cys396. The N-linked (GlcNAc...) asparagine; by host glycan is linked to Asn347. Asn433 is a glycosylation site (N-linked (GlcNAc...) asparagine; by host). 2 disulfides stabilise this stretch: Cys465–Cys565 and Cys582–Cys613. The segment at residues 726–746 (VLFSGVSWTMKIGIGILLTWL) is an intramembrane region (helical). The Extracellular portion of the chain corresponds to 747-752 (GLNSRS). Positions 753–775 (TSLSMTCIAVGMVTLYLGVMVQA) form an intramembrane region, helical. The Extracellular segment spans residues 776-1125 (DSGCVINWKG…KEENLVRSMV (350 aa)). 6 cysteine pairs are disulfide-bonded: Cys779–Cys790, Cys830–Cys918, Cys954–Cys998, Cys1055–Cys1104, Cys1066–Cys1088, and Cys1087–Cys1091. 2 N-linked (GlcNAc...) asparagine; by host glycosylation sites follow: Asn905 and Asn982. Residues 1126 to 1146 (SAGSGEVDSFSLGILCVSIMI) form a helical membrane-spanning segment. The Cytoplasmic segment spans residues 1147-1157 (EEVMRSRWSRK). Residues 1158 to 1178 (MLMTGTLAVFLLLIMGQLTWN) form a helical membrane-spanning segment. The Lumenal portion of the chain corresponds to 1179–1199 (DLIRLCIMVGANASDKMGMGT). A glycan (N-linked (GlcNAc...) asparagine; by host) is linked at Asn1190. The helical transmembrane segment at 1200–1220 (TYLALMATFKMRPMFAVGLLF) threads the bilayer. Topologically, residues 1221–1289 (RRLTSREVLL…TFIKTTLSLD (69 aa)) are cytoplasmic. Residues 1290–1310 (YAWKTTAMVLSIVSLFPLCLS) form a helical membrane-spanning segment. Topologically, residues 1311–1315 (TTSQK) are lumenal. Residues 1316–1336 (TTWLPVLLGSFGCKPLTMFLI) traverse the membrane as a helical segment. The Cytoplasmic portion of the chain corresponds to 1337 to 1346 (TENEIWGRKS). Residues 1347 to 1367 (WPLNEGIMAIGIVSILLSSLL) traverse the membrane as a helical segment. Topologically, residues 1368–1370 (KND) are lumenal. A helical membrane pass occupies residues 1371-1391 (VPLAGPLIAGGMLIACYVISG). Over 1392 to 1447 (SSADLSLEKAAEVSWEEEAEHSGTSHNILVEVQDDGTMKIKDEERDDTLTILLKAT) the chain is Cytoplasmic. Residues 1398–1437 (LEKAAEVSWEEEAEHSGTSHNILVEVQDDGTMKIKDEERD) form an interacts with and activates NS3 protease region. The helical intramembrane region spans 1448 to 1468 (LLAVSGVYPMSIPATLFVWYF). The Cytoplasmic segment spans residues 1469–2148 (WQKKKQRSGV…MEELPDTIET (680 aa)). The Peptidase S7 domain maps to 1476 to 1653 (SGVLWDTPSP…KASQEGPLPE (178 aa)). Active-site charge relay system; for serine protease NS3 activity residues include His1526, Asp1550, and Ser1610. Residues 1656 to 1812 (DEVFKKRNLT…QSNAVIQDEE (157 aa)) form the Helicase ATP-binding domain. 1669–1676 (LHPGSGKT) contributes to the ATP binding site. A DEAH box motif is present at residues 1760–1763 (DEAH). The Helicase C-terminal domain occupies 1822 to 1989 (SGYDWITDFP…IIPALFEPER (168 aa)). Lys1864 carries the post-translational modification N6-acetyllysine; by host. Residues 2149–2169 (LMLLALIAVLTGGVTLFFLSG) form a helical membrane-spanning segment. The Lumenal segment spans residues 2170 to 2171 (KG). The helical intramembrane region spans 2172–2192 (LGKTSIGLLCVTASSALLWMA). A topological domain (lumenal) is located at residue Ser2193. A helical transmembrane segment spans residues 2194-2214 (VEPHWIAASIILEFFLMVLLI). Topologically, residues 2215 to 2229 (PEPDRQRTPQDNQLA) are cytoplasmic. A helical membrane pass occupies residues 2230 to 2250 (YVVIGLLFMILTVAANEMGLL). Residues 2251-2276 (ETTKKDLGIGHVAAENHQHATILDVD) are Lumenal-facing. The segment at residues 2277–2297 (LHPASAWTLYAVATTVITPMM) is an intramembrane region (helical). Residues 2298–2349 (RHTIENTTANISLTAIANQAAILMGLDKGWPISKMDLGVPLLALGCYSQVNP) lie on the Lumenal side of the membrane. Asn2303 and Asn2307 each carry an N-linked (GlcNAc...) asparagine; by host glycan. A helical transmembrane segment spans residues 2350–2370 (LTLTAAVLMLVAHYAIIGPGL). Over 2371–2415 (QAKATREAQKRTAAGIMKNPTVDGIVAIDLDPVVYDAKFEKQLGQ) the chain is Cytoplasmic. Residues 2416 to 2436 (IMLLILCTSQILLMRTTWALC) form a helical membrane-spanning segment. Residues 2437–2461 (ESITLATGPLTTLWEGSPGKFWNTT) lie on the Lumenal side of the membrane. N-linked (GlcNAc...) asparagine; by host glycosylation is present at Asn2459. The helical transmembrane segment at 2462–2482 (IAVSMANIFRGSYLAGAGLAF) threads the bilayer. The Cytoplasmic segment spans residues 2483–3392 (SLMKSLGGGR…NESDPEGALW (910 aa)). Residues 2495 to 2756 (TGAQGETLGE…DVDLGAGTRH (262 aa)) enclose the mRNA cap 0-1 NS5-type MT domain. S-adenosyl-L-methionine-binding residues include Ser2549, Gly2579, Trp2580, Thr2597, Lys2598, Asp2624, Val2625, Ile2640, and Tyr2711. Residues 3021 to 3170 (NMYADDTAGW…PIDDRFATAL (150 aa)) enclose the RdRp catalytic domain.

In the N-terminal section; belongs to the class I-like SAM-binding methyltransferase superfamily. mRNA cap 0-1 NS5-type methyltransferase family. In terms of assembly, capsid protein C: Homodimer. Interacts (via N-terminus) with host EXOC1 (via C-terminus); this interaction results in EXOC1 degradation through the proteasome degradation pathway. As to quaternary structure, forms heterodimers with envelope protein E in the endoplasmic reticulum and Golgi. Homodimer; in the endoplasmic reticulum and Golgi. Interacts with protein prM. Interacts with non-structural protein 1. In terms of assembly, homodimer; Homohexamer when secreted. Interacts with envelope protein E. As to quaternary structure, interacts (via N-terminus) with serine protease NS3. Forms a heterodimer with serine protease NS3. May form homooligomers. In terms of assembly, forms a heterodimer with NS2B. Interacts with NS4B. Interacts with unphosphorylated RNA-directed RNA polymerase NS5; this interaction stimulates RNA-directed RNA polymerase NS5 guanylyltransferase activity. Interacts with host SHFL. As to quaternary structure, interacts with host MAVS; this interaction inhibits the synthesis of IFN-beta. Interacts with host SHFL. Interacts with host AUP1; the interaction occurs in the presence of Dengue virus NS4B and induces lipophagy which facilitates production of virus progeny particles. Interacts with serine protease NS3. In terms of assembly, homodimer. Interacts with host STAT2; this interaction inhibits the phosphorylation of the latter, and, when all viral proteins are present (polyprotein), targets STAT2 for degradation. Interacts with serine protease NS3. Post-translationally, specific enzymatic cleavages in vivo yield mature proteins. Cleavages in the lumen of endoplasmic reticulum are performed by host signal peptidase, wereas cleavages in the cytoplasmic side are performed by the Serine protease NS3. Signal cleavage at the 2K-4B site requires a prior NS3 protease-mediated cleavage at the 4A-2K site. A C-terminally truncated form of non-structural protein 2A, results from partial cleavage by NS3. In terms of processing, cleaved in post-Golgi vesicles by a host furin, releasing the mature small envelope protein M, and peptide pr. This cleavage is incomplete as up to 30% of viral particles still carry uncleaved prM. Post-translationally, the excreted form is glycosylated and this is required for efficient secretion of the protein from infected cells. Phosphorylated on serines residues. This phosphorylation may trigger NS5 nuclear localization. In terms of processing, N-glycosylated. Post-translationally, acetylated by host KAT5. Acetylation modulates NS3 RNA-binding and unwinding activities and plays an important positive role for viral replication.

The protein resides in the virion. Its subcellular location is the host nucleus. It is found in the secreted. The protein localises to the virion membrane. It localises to the host endoplasmic reticulum membrane. The protein resides in the host mitochondrion. It carries out the reaction Selective hydrolysis of -Xaa-Xaa-|-Yaa- bonds in which each of the Xaa can be either Arg or Lys and Yaa can be either Ser or Ala.. The catalysed reaction is RNA(n) + a ribonucleoside 5'-triphosphate = RNA(n+1) + diphosphate. The enzyme catalyses a ribonucleoside 5'-triphosphate + H2O = a ribonucleoside 5'-diphosphate + phosphate + H(+). It catalyses the reaction ATP + H2O = ADP + phosphate + H(+). It carries out the reaction a 5'-end (5'-triphosphoguanosine)-ribonucleoside in mRNA + S-adenosyl-L-methionine = a 5'-end (N(7)-methyl 5'-triphosphoguanosine)-ribonucleoside in mRNA + S-adenosyl-L-homocysteine. The catalysed reaction is a 5'-end (N(7)-methyl 5'-triphosphoguanosine)-ribonucleoside in mRNA + S-adenosyl-L-methionine = a 5'-end (N(7)-methyl 5'-triphosphoguanosine)-(2'-O-methyl-ribonucleoside) in mRNA + S-adenosyl-L-homocysteine + H(+). In terms of biological role, plays a role in virus budding by binding to membrane and gathering the viral RNA into a nucleocapsid that forms the core of a mature virus particle. During virus entry, may induce genome penetration in host cytoplasm after hemifusion induced by surface proteins. Can migrate tot cell nucleus where it modulates host functions. Its function is as follows. Prevents premature fusion activity of envelope proteins in trans Golgi by binding to envelope protein E at pH6.0. After virion release in extracellular space gets dissociated from E dimers. Functionally, acts as a chaperone for envelope protein E during intracellular virion assembly by masking and inactivating envelope protein E fusion peptide. prM is the only viral peptide matured by host furin in the trans-Golgi network. Presumably to avoid catastrophic activation of the viral fusion activity in acidic GolGi compartment prior to virion release. prM-E cleavage is ineficient, and many virions are only partially matured. These uncleaved prM would play a role in immune evasion. May play a role in virus budding. Exerts cytotoxic effects by activating a mitochondrial apoptotic pathway through M extodomain. May display a viroporin activity. In terms of biological role, binds to host cell surface receptor and mediates fusion between viral and cellular membranes. Envelope protein is synthesized in the endoplasmic reticulum in the form of heterodimer with protein prM. They play a role in virion budding in the ER, and the newly formed immature particle is covered with 60 spikes composed of heterodimer between precursor prM and envelope protein E. The virion is transported to the Golgi apparatus where the low pH causes dissociation of PrM-E heterodimers and formation of E homodimers. prM-E cleavage is ineficient, and many virions are only partially matured. These uncleaved prM would play a role in immune evasion. Its function is as follows. Involved in immune evasion, pathogenesis and viral replication. Once cleaved off the polyprotein, is targeted to three destinations: the viral replication cycle, the plasma membrane and the extracellular compartment. May play a role in viral genome replication. Assist membrane bending and envelopment of genomic RNA at the endoplasmic reticulum. Excreted as a hexameric lipoparticle that plays a role against host immune response. Functionally, component of the viral RNA replication complex that functions in virion assembly and antagonizes the host immune response. Required cofactor for the serine protease function of NS3. May have membrane-destabilizing activity and form viroporins. In terms of biological role, displays three enzymatic activities: serine protease, NTPase and RNA helicase. NS3 serine protease, in association with NS2B, performs its autocleavage and cleaves the polyprotein at dibasic sites in the cytoplasm: C-prM, NS2A-NS2B, NS2B-NS3, NS3-NS4A, NS4A-2K and NS4B-NS5. NS3 RNA helicase binds RNA and unwinds dsRNA in the 3' to 5' direction. Its function is as follows. Regulates the ATPase activity of the NS3 helicase activity. NS4A allows NS3 helicase to conserve energy during unwinding. Plays a role in the inhibition of the host innate immune response. Interacts with host MAVS and thereby prevents the interaction between RIGI and MAVS. In turn, IFN-beta production is impaired. Interacts with host AUP1 which mediates induction of lipophagy in host cells and facilitates production of virus progeny particles. Functionally, functions as a signal peptide for NS4B and is required for the interferon antagonism activity of the latter. Inhibits interferon (IFN)-induced host STAT1 phosphorylation and nuclear translocation, thereby preventing the establishment of cellular antiviral state by blocking the IFN-alpha/beta pathway. In terms of biological role, replicates the viral (+) and (-) genome, and performs the capping of genomes in the cytoplasm. NS5 methylates viral RNA cap at guanine N-7 and ribose 2'-O positions. Besides its role in RNA genome replication, also prevents the establishment of cellular antiviral state by blocking the interferon-alpha/beta (IFN-alpha/beta) signaling pathway. Inhibits host TYK2 and STAT2 phosphorylation, thereby preventing activation of JAK-STAT signaling pathway. The sequence is that of Genome polyprotein from Dengue virus type 1 (strain Brazil/97-11/1997) (DENV-1).